Here is a 477-residue protein sequence, read N- to C-terminus: Inner membrane transporter YgjI (477 aa).

At 1–8 (MSDTKRNT) the chain is on the periplasmic side. The chain crosses the membrane as a helical span at residues 9 to 29 (IGKFGLLSLTFAAVYSFNNVI). Residues 30–41 (NNNIELGLASAP) lie on the Cytoplasmic side of the membrane. Residues 42–62 (MFFLATIFYFIPFCLIIAEFV) form a helical membrane-spanning segment. Residues 63–83 (SLNKNSEAGVYAWVKSSLGGR) are Periplasmic-facing. A helical transmembrane segment spans residues 84 to 104 (WAFITAYTYWFVNLFFFTSLL). Residues 105-120 (PRVIAYASYAFLGYEY) lie on the Cytoplasmic side of the membrane. The chain crosses the membrane as a helical span at residues 121–141 (IMTPVATTIISMVLFAFSTWV). Topologically, residues 142–158 (STNGAKMLGPITSVTST) are periplasmic. Residues 159-179 (LMLLLTLSYILLAGTALVGGV) traverse the membrane as a helical segment. The Cytoplasmic portion of the chain corresponds to 180–196 (QPADAITVDAMIPNFNW). Residues 197–217 (AFLGVTTWIFMAAGGAESVAV) traverse the membrane as a helical segment. Topologically, residues 218 to 232 (YVNDVKGGSKSFVKV) are periplasmic. A helical transmembrane segment spans residues 233-253 (IILAGIFIGVLYSVSSVLINV). Topologically, residues 254-263 (FVSSKELKFT) are cytoplasmic. The chain crosses the membrane as a helical span at residues 264-284 (GGSVQVFHGMAAYFGLPEALM). Over 285–286 (NR) the chain is Periplasmic. Residues 287-307 (FVGLVSFTAMFGSLLMWTATP) traverse the membrane as a helical segment. Over 308-335 (VKIFFSEIPEGIFGKKTVELNENGVPAR) the chain is Cytoplasmic. A helical transmembrane segment spans residues 336–356 (AAWIQFLIVIPLMIIPMLGSN). Over 357-364 (TVQDLMNT) the chain is Periplasmic. The chain crosses the membrane as a helical span at residues 365 to 385 (IINMTAAASMLPPLFIMLAYL). At 386–405 (NLRAKLDHLPRDFRMGSRRT) the chain is on the cytoplasmic side. A helical transmembrane segment spans residues 406–426 (GIIVVSMLIAIFAVGFVASTF). The Periplasmic segment spans residues 427-431 (PTGAN). Residues 432-452 (ILTIIFYNVGGIVIFLGFAWW) traverse the membrane as a helical segment. Residues 453-477 (KYSKYIKGLTAEERHIEATPASNVD) are Cytoplasmic-facing.

It belongs to the amino acid-polyamine-organocation (APC) superfamily.

Its subcellular location is the cell inner membrane. The chain is Inner membrane transporter YgjI (ygjI) from Escherichia coli (strain K12).